The following is a 243-amino-acid chain: Probable transcriptional regulatory protein BP2308 (243 aa).

Positions 1-21 (MAGHSKWANIQHRKGRQDAKR) are disordered.

Belongs to the TACO1 family.

Its subcellular location is the cytoplasm. In Bordetella pertussis (strain Tohama I / ATCC BAA-589 / NCTC 13251), this protein is Probable transcriptional regulatory protein BP2308.